Consider the following 280-residue polypeptide: MASSFKSPADTAKACVGVAALKEKAPLSNLIVLSFVAGAYIAFGGLLAEVATGGMAAAGWPTGLVKLVFGGVFPVGLMLVVIAGSELFTGNCMYMPMGILQGEASVMGTIKNWVGSWVFNLVGALFVAYVLAYLTGILTAEPWAATAVTIAKTKALGGAQFIAAGKTVTSLSWMQVFWRAIGCNWLVCLAVYLAVASDDVIGKSFGIWFPIMAFVCIGFEHVVANMFFIPVGIFIGGVTWSQFFINNMIPATLGNIVGGAIFVGCIYWFTYLRGTNKAKA.

A run of 6 helical transmembrane segments spans residues 33–49 (LSFVAGAYIAFGGLLAE), 67–83 (LVFGGVFPVGLMLVVIA), 116–133 (SWVFNLVGALFVAYVLAY), 177–195 (FWRAIGCNWLVCLAVYLAV), 204–219 (SFGIWFPIMAFVCIGF), and 253–272 (LGNIVGGAIFVGCIYWFTYL).

Belongs to the FNT transporter (TC 1.A.16) family.

The protein resides in the cell membrane. Functionally, may act as a formate transporter. In Methanobacterium formicicum, this protein is Probable formate transporter (fdhC).